A 1043-amino-acid chain; its full sequence is MEFDRRKAAALAALASPAPDKSPKGGVDAPIAPLLDALNSHPDLFTTSSCSGRVSVLAQPPPPQQADPGGAKTKKKARGGGWVYISHDPADPEALVEVLFGVKEGGGGGDDELVFRFEPMIVAVECRDAAAAAALVAAAVGAGFRESGITSLQKRVMVALRCSIRMEVPLGQTKELVVSPDYIRYLVRIANSKMEANKKRMGGFLDLLQAKISLEASYLESQDPVLQNGAKHGFGNAKRHVLISLSFYPAFISPHGVILTQEEALPTLSGNTTHCLSTAALEITGEPIEKLFLWGQSACALTVGREHHILTFGGFGGPGRHARRNYSLLVNPGSGLLTELKVTGSPSPRMGHTITVVGNDIYVVGGRSGPSEILNDIWVLERSNNRWSKVDCSGDFFRPRHRHAAAAVDRKVYVFGGLSDDGLCSCMNIMDTASIQWNVISPDDKWPCARHSHSLVSYGSKLFLFGGHDGQRALNDFYSFDTTTLKWNKENTNGKAPSPRFSHCMFIYKDYLGILGGCPIRESSQEIALLNLKHKIWFYVSIPSLSQCLCVRSSSVIIDDDLVIVGGGASCYAFGTRFSQPIKIDLHLLESIFKLAYNKEKEMSVQHGSVSNVDLLEGHEENCNPSDNVKVVIDTATLGSSPLVLQLEKKYAKLAKDILKKFGWLDLTRKVRVSQDNIHVLFPVSKTFHALITDKHLKVQPDDSCVFEELLPFSENKLFGASISLQKALEILLLCRGSILKDEVAISRKASKTPQTIMRELVSVLLDKKGLPSQLLEQLPTRWETLGDIIVLPKTCFKDPLWESVRDDLWPLVAKSLGAQRLARQGKITPNGTRDSTLELLVGNDGWLTHHENGICYSLDATKCMFSSGNRSEKLRMGKLDCRDEVVVDLFAGIGYFVLPFLVKANAKLVYACEWNPHALEALQRNVMDNHVADRCIILEGDNRLTAPKGIADRVCLGLLPSSECSWDTAVRALRAEGGMLHIHGNVNDSDESLWLDNVVKSITNIAKTHGLSWNVTVEHVERVKWYGPHIRHLVVDVKCRAT.

The interval 1–233 (MEFDRRKAAA…PVLQNGAKHG (233 aa)) is tRNA wybutosine-synthesizing protein 3 homolog. The interval 53–75 (RVSVLAQPPPPQQADPGGAKTKK) is disordered. 4 Kelch repeats span residues 360–410 (DIYV…AVDR), 412–460 (VYVF…SYGS), 461–510 (KLFL…IYKD), and 512–559 (LGIL…VIID). The tract at residues 700–1041 (QPDDSCVFEE…RHLVVDVKCR (342 aa)) is tRNA wybutosine-synthesizing protein 2 homolog. Residues Lys874 and 942-943 (DN) each bind S-adenosyl-L-methionine.

The protein in the C-terminal section; belongs to the class I-like SAM-binding methyltransferase superfamily. TRM5/TYW2 family. In the N-terminal section; belongs to the TYW3 family.

The catalysed reaction is 4-demethyl-7-[(3S)-3-amino-3-carboxypropyl]wyosine(37) in tRNA(Phe) + S-adenosyl-L-methionine = 7-[(3S)-3-amino-3-carboxypropyl]wyosine(37) in tRNA(Phe) + S-adenosyl-L-homocysteine + H(+). It carries out the reaction 4-demethylwyosine(37) in tRNA(Phe) + S-adenosyl-L-methionine = 4-demethyl-7-[(3S)-3-amino-3-carboxypropyl]wyosine(37) in tRNA(Phe) + S-methyl-5'-thioadenosine + H(+). Its pathway is tRNA modification; wybutosine-tRNA(Phe) biosynthesis. S-adenosyl-L-methionine-dependent transferase that acts as a component of the wybutosine biosynthesis pathway. Wybutosine is a hyper modified guanosine with a tricyclic base found at the 3'-position adjacent to the anticodon of eukaryotic phenylalanine tRNA. The chain is tRNA wybutosine-synthesizing protein 2/3/4 from Oryza sativa subsp. japonica (Rice).